Reading from the N-terminus, the 294-residue chain is 33 kDa chaperonin (294 aa).

Disulfide bonds link cysteine 239/cysteine 241 and cysteine 272/cysteine 275.

The protein belongs to the HSP33 family. Post-translationally, under oxidizing conditions two disulfide bonds are formed involving the reactive cysteines. Under reducing conditions zinc is bound to the reactive cysteines and the protein is inactive.

It localises to the cytoplasm. Functionally, redox regulated molecular chaperone. Protects both thermally unfolding and oxidatively damaged proteins from irreversible aggregation. Plays an important role in the bacterial defense system toward oxidative stress. The chain is 33 kDa chaperonin from Listeria monocytogenes serovar 1/2a (strain ATCC BAA-679 / EGD-e).